The chain runs to 176 residues: Probable DNA-directed RNA polymerase subunit delta (176 aa).

The HTH HARE-type domain occupies 14-81 (CSMIEVVHSV…GENRWGLRSW (68 aa)). The tract at residues 90–176 (EILPQPKPKK…ETEEEEEEEL (87 aa)) is disordered. The segment covering 106–176 (DGFDDYIEED…ETEEEEEEEL (71 aa)) has biased composition (acidic residues).

Belongs to the RpoE family. In terms of assembly, RNAP is composed of a core of 2 alpha, a beta and a beta' subunits. The core is associated with a delta subunit and one of several sigma factors.

Its function is as follows. Participates in both the initiation and recycling phases of transcription. In the presence of the delta subunit, RNAP displays an increased specificity of transcription, a decreased affinity for nucleic acids, and an increased efficiency of RNA synthesis because of enhanced recycling. This is Probable DNA-directed RNA polymerase subunit delta from Bacillus thuringiensis subsp. konkukian (strain 97-27).